Here is a 423-residue protein sequence, read N- to C-terminus: 26S proteasome regulatory subunit 6A-A (423 aa).

Residue 211-218 (GPPGTGKT) coordinates ATP.

The protein belongs to the AAA ATPase family. As to quaternary structure, may form a heterodimer with a related family member.

The protein localises to the cytoplasm. It is found in the nucleus. Its function is as follows. The 26S proteasome is involved in the ATP-dependent degradation of ubiquitinated proteins. The regulatory (or ATPase) complex confers ATP dependency and substrate specificity to the 26S complex. This chain is 26S proteasome regulatory subunit 6A-A, found in Xenopus laevis (African clawed frog).